The chain runs to 216 residues: Cytidylate kinase (216 aa).

11–19 (GPAGAGKGT) lines the ATP pocket.

It belongs to the cytidylate kinase family. Type 1 subfamily.

The protein resides in the cytoplasm. It catalyses the reaction CMP + ATP = CDP + ADP. The enzyme catalyses dCMP + ATP = dCDP + ADP. The protein is Cytidylate kinase of Mesorhizobium japonicum (strain LMG 29417 / CECT 9101 / MAFF 303099) (Mesorhizobium loti (strain MAFF 303099)).